A 190-amino-acid chain; its full sequence is Protein GrpE (190 aa).

Residues 1-18 (MTETPNTSSEEIQTSEPS) show a composition bias toward polar residues. The disordered stretch occupies residues 1 to 21 (MTETPNTSSEEIQTSEPSPDN).

Belongs to the GrpE family. As to quaternary structure, homodimer.

The protein localises to the cytoplasm. Participates actively in the response to hyperosmotic and heat shock by preventing the aggregation of stress-denatured proteins, in association with DnaK and GrpE. It is the nucleotide exchange factor for DnaK and may function as a thermosensor. Unfolded proteins bind initially to DnaJ; upon interaction with the DnaJ-bound protein, DnaK hydrolyzes its bound ATP, resulting in the formation of a stable complex. GrpE releases ADP from DnaK; ATP binding to DnaK triggers the release of the substrate protein, thus completing the reaction cycle. Several rounds of ATP-dependent interactions between DnaJ, DnaK and GrpE are required for fully efficient folding. This is Protein GrpE from Chlamydia trachomatis serovar L2 (strain ATCC VR-902B / DSM 19102 / 434/Bu).